Reading from the N-terminus, the 454-residue chain is uncharacterized protein (454 aa).

Positions 422 to 454 (EWLPPAHLDHGQPRTNSYFHPEKLLHDSDEDDP) are disordered.

The protein belongs to the Rv1128c/1148c/1588c/1702c/1945/3466 family.

This is an uncharacterized protein from Mycobacterium tuberculosis (strain CDC 1551 / Oshkosh).